Reading from the N-terminus, the 313-residue chain is BTB/POZ domain-containing adapter for CUL3-mediated RhoA degradation protein 3 (313 aa).

The residue at position 1 (Met-1) is an N-acetylmethionine. Residue Ser-23 is modified to Phosphoserine. The region spanning 32–100 is the BTB domain; the sequence is KYVKLNVGGA…LRDGAVPLPE (69 aa). Residues 239 to 245 carry the PCNA-binding motif; sequence QTKVEFP.

Belongs to the BACURD family. Homotetramer; forms a two-fold symmetric tetramer in solution. Interacts with CUL3; interaction is direct and forms a 5:5 heterodecamer. Component of the BCR(BACURD3) E3 ubiquitin ligase complex, at least composed of CUL3, KCTD10/BACURD3 and RBX1. Interacts with DNA polymerase delta subunit 2/POLD2. Interacts with PCNA.

It is found in the nucleus. It functions in the pathway protein modification; protein ubiquitination. In terms of biological role, substrate-specific adapter of a BCR (BTB-CUL3-RBX1) E3 ubiquitin-protein ligase complex. The BCR(BACURD3) E3 ubiquitin ligase complex mediates the ubiquitination of target proteins, leading to their degradation by the proteasome. The sequence is that of BTB/POZ domain-containing adapter for CUL3-mediated RhoA degradation protein 3 (KCTD10) from Homo sapiens (Human).